Here is a 435-residue protein sequence, read N- to C-terminus: Putrescine transporter PotE (435 aa).

The next 12 membrane-spanning stretches (helical) occupy residues 8–28 (IGVV…GIIM), 39–59 (ISIV…YAFA), 95–115 (LVIA…ELFG), 117–137 (ILSP…ATVL), 148–168 (ISSF…IIGW), 185–205 (VPTF…FLGL), 224–244 (IAVL…TNVI), 275–295 (VIMG…QFTI), 320–340 (APVV…LMTI), 354–374 (LAVV…AVLL), 386–406 (TTVF…YAAG), and 409–429 (AMLY…FVSY).

It belongs to the amino acid-polyamine-organocation (APC) superfamily. Basic amino acid/polyamine antiporter (APA) (TC 2.A.3.2) family.

The protein resides in the cell inner membrane. The catalysed reaction is putrescine(in) + H(+)(in) = putrescine(out) + H(+)(out). The enzyme catalyses putrescine(in) + L-ornithine(out) = putrescine(out) + L-ornithine(in). Its function is as follows. Catalyzes both the uptake and excretion of putrescine. The uptake of putrescine is dependent on the membrane potential and the excretion involves putrescine-ornithine antiporter activity. The polypeptide is Putrescine transporter PotE (Haemophilus influenzae (strain ATCC 51907 / DSM 11121 / KW20 / Rd)).